Here is a 1820-residue protein sequence, read N- to C-terminus: Afadin (1820 aa).

The 95-residue stretch at Phe-39–Asp-133 folds into the Ras-associating 1 domain. Positions Lys-129–Ser-196 are disordered. Residues Glu-146–Arg-186 are a coiled coil. Positions Thr-160 to Lys-172 are enriched in basic residues. Over residues Glu-173–Gln-189 the composition is skewed to basic and acidic residues. Residues Ser-216, Ser-246, and Ser-256 each carry the phosphoserine modification. The region spanning Ser-246–Pro-348 is the Ras-associating 2 domain. The span at Lys-356–Asp-371 shows a compositional bias: basic and acidic residues. The segment at Lys-356–Ser-377 is disordered. Phosphoserine is present on residues Ser-391 and Ser-424. In terms of domain architecture, FHA spans Thr-426–Gly-492. A phosphoserine mark is found at Ser-512, Ser-557, Ser-562, Ser-655, Ser-1083, Ser-1107, Ser-1126, Ser-1140, Ser-1143, Ser-1172, Ser-1173, Ser-1182, and Ser-1199. Residues Gly-538–Arg-569 form a disordered region. The region spanning Asp-653–Asn-908 is the Dilute domain. The region spanning Ile-1007–Gly-1093 is the PDZ domain. The segment at Ser-1107–Ala-1194 is disordered. Basic and acidic residues predominate over residues Ile-1113 to Gly-1128. The segment covering Tyr-1132–Ser-1143 has biased composition (polar residues). Residues Ser-1152–Ser-1172 show a composition bias toward basic and acidic residues. The disordered stretch occupies residues Gly-1203–Pro-1222. Thr-1232 is subject to Phosphothreonine. Disordered regions lie at residues Ala-1235–Glu-1278, Gln-1308–Gln-1527, and Arg-1567–Gln-1716. Ser-1238 is subject to Phosphoserine. Positions Tyr-1252–Ser-1262 are enriched in basic and acidic residues. Position 1275 is a phosphoserine (Ser-1275). Low complexity predominate over residues Ser-1309–Ser-1318. The segment covering Ser-1325–Lys-1337 has biased composition (polar residues). Ser-1328 carries the phosphoserine modification. Thr-1330 is subject to Phosphothreonine. Residues Leu-1364–Val-1373 show a composition bias toward pro residues. Residues Glu-1407 to Leu-1440 are compositionally biased toward basic and acidic residues. Residues Lys-1410 to Gln-1446 are a coiled coil. Residues Met-1443 to Ala-1457 show a composition bias toward polar residues. Residues Thr-1487–Leu-1503 are compositionally biased toward basic and acidic residues. Phosphoserine occurs at positions 1499 and 1510. The segment covering Pro-1513 to Gln-1526 has biased composition (basic and acidic residues). Residues Glu-1523–Glu-1561 are a coiled coil. Positions Glu-1576 to Asp-1587 are enriched in acidic residues. A coiled-coil region spans residues Gln-1593–Gln-1665. The segment covering Leu-1595 to Glu-1675 has biased composition (basic and acidic residues). A phosphoserine mark is found at Ser-1694, Ser-1719, Ser-1770, and Ser-1795. A disordered region spans residues Glu-1734–Lys-1820. Positions Ala-1759–Asp-1772 are enriched in basic and acidic residues. A compositionally biased stretch (basic and acidic residues) spans Val-1800–Lys-1820. Lys-1803 bears the N6-acetyllysine mark.

In terms of assembly, homodimer. Interacts with F-actin, nectin and NECTIN3. Essential for the association of nectin and E-cadherin. Isoform 2/s-afadin does not interact with F-actin. Interacts with ZO-1 and occludin, but probably in an indirect manner. Interacts with RIT1, RIT2, NRXN1 and BCR. Interacts with ADAM10; the interaction locks ADAM10 at adherens junctions following ADAM10 recruitment to adherens junctions by TSPAN33. In terms of tissue distribution, isoform 1 is expressed only in a restricted set of epithelial structures during early embryogenesis.

It is found in the cell junction. The protein resides in the adherens junction. In terms of biological role, belongs to an adhesion system, probably together with the E-cadherin-catenin system, which plays a role in the organization of homotypic, interneuronal and heterotypic cell-cell adherens junctions (AJs). Nectin- and actin-filament-binding protein that connects nectin to the actin cytoskeleton. May play a key role in the organization of epithelial structures of the embryonic ectoderm. Essential for the organization of adherens junctions. The protein is Afadin of Mus musculus (Mouse).